The following is a 123-amino-acid chain: Succinate dehydrogenase hydrophobic membrane anchor subunit (123 aa).

Residues 1-13 (MAETEKMKYGSLN) are Cytoplasmic-facing. The helical transmembrane segment at 14–34 (RFAQAVTGLFLLFFLGVHLYV) threads the bilayer. Residues 35–59 (AHIDFGHPVAFFSSVINQLHNPWWL) lie on the Extracellular side of the membrane. The chain crosses the membrane as a helical span at residues 60–81 (AFFLIFVYIITYHGINGLNHIV). H72 is a heme binding site. Topologically, residues 82-91 (ADTSISEKAK) are cytoplasmic. Residues 92-116 (RNIGIALMVIYVITIIYGTILALLV) form a helical membrane-spanning segment.

As to quaternary structure, part of an enzyme complex containing four subunits: a flavoprotein, an iron-sulfur protein, plus two membrane-anchoring proteins, SdhC and SdhD. Requires heme as cofactor.

It is found in the cell membrane. Its pathway is carbohydrate metabolism; tricarboxylic acid cycle. Membrane-anchoring subunit of succinate dehydrogenase (SDH). This chain is Succinate dehydrogenase hydrophobic membrane anchor subunit (sdhD), found in Thermoplasma acidophilum (strain ATCC 25905 / DSM 1728 / JCM 9062 / NBRC 15155 / AMRC-C165).